The sequence spans 330 residues: NADH-quinone oxidoreductase subunit H (330 aa).

8 helical membrane-spanning segments follow: residues 11-31 (ILVAVLKAIVILLAVVVCGAL), 81-101 (FIFVLAPMIAFAAMLMAFAII), 114-134 (IGILFFFAMAGLSVYAVLFAG), 154-174 (ISYEVFLALALMGVVAQVGSF), 187-207 (LWFIIPQFFGFCTFFIAGVAV), 238-258 (FFVGEYVGIVTISALLVTLFF), 270-290 (QIPFFWFALKTAFFIMIFILL), and 309-329 (FCLPLTLINLLVTGALVLAAA).

This sequence belongs to the complex I subunit 1 family. In terms of assembly, NDH-1 is composed of 13 different subunits. Subunits NuoA, H, J, K, L, M, N constitute the membrane sector of the complex.

It is found in the cell inner membrane. The catalysed reaction is a quinone + NADH + 5 H(+)(in) = a quinol + NAD(+) + 4 H(+)(out). NDH-1 shuttles electrons from NADH, via FMN and iron-sulfur (Fe-S) centers, to quinones in the respiratory chain. The immediate electron acceptor for the enzyme in this species is believed to be ubiquinone. Couples the redox reaction to proton translocation (for every two electrons transferred, four hydrogen ions are translocated across the cytoplasmic membrane), and thus conserves the redox energy in a proton gradient. This subunit may bind ubiquinone. The chain is NADH-quinone oxidoreductase subunit H from Ectopseudomonas mendocina (strain ymp) (Pseudomonas mendocina).